Here is a 464-residue protein sequence, read N- to C-terminus: Probable glycosyltransferase Saci_1499 (464 aa).

6 helical membrane passes run 6-26, 300-320, 337-357, 373-393, 416-436, and 439-459; these read IFLN…QIIL, LIIY…STLL, ALLF…SLAL, LTAF…KGLL, IIAI…LYIY, and YYVT…TMLL.

Belongs to the glycosyltransferase 2 family.

It localises to the cell membrane. Functionally, probably part of a 4-gene DNA damage response locus in which the upstream ups system, in combination with this downstream locus, functions in homologous recombination to rescue Sulfolobales from DNA-damaging threats. The sequence is that of Probable glycosyltransferase Saci_1499 from Sulfolobus acidocaldarius (strain ATCC 33909 / DSM 639 / JCM 8929 / NBRC 15157 / NCIMB 11770).